Consider the following 393-residue polypeptide: Glycocyamine kinase (393 aa).

Residues 7–94 enclose the Phosphagen kinase N-terminal domain; sequence REKFAKENFP…FDRVIEEIHH (88 aa). One can recognise a Phosphagen kinase C-terminal domain in the interval 120–362; it reads YVKSCRIRCG…NVLIEADKRL (243 aa). ATP-binding positions include 123-127, His-186, Arg-231, 287-291, 315-320, and Asp-330; these read SCRIR, RASVH, and RGTGGE. The tract at residues 367–393 is disordered; that stretch reads PIDDLTPRLNSSTGTSISATASRHMTL. The segment covering 377–393 has biased composition (low complexity); it reads SSTGTSISATASRHMTL.

It belongs to the ATP:guanido phosphotransferase family. In terms of assembly, monomer.

The catalysed reaction is guanidinoacetate + ATP = phosphoguanidinoacetate + ADP + H(+). This chain is Glycocyamine kinase, found in Hediste diversicolor (Sandworm).